Reading from the N-terminus, the 705-residue chain is Polyribonucleotide nucleotidyltransferase (705 aa).

Residues Asp-486 and Asp-492 each contribute to the Mg(2+) site. Positions 553–612 (PRIYTMKINPEKIKDVIGKGGSVIRALTDETGTTIEIEDDGTIKIAATDGDKAKHAIRRI) constitute a KH domain. Positions 622–690 (GRIYAGKVTR…RQGRIRLSIK (69 aa)) constitute an S1 motif domain.

Belongs to the polyribonucleotide nucleotidyltransferase family. Component of the RNA degradosome, which is a multiprotein complex involved in RNA processing and mRNA degradation. It depends on Mg(2+) as a cofactor.

The protein localises to the cytoplasm. It carries out the reaction RNA(n+1) + phosphate = RNA(n) + a ribonucleoside 5'-diphosphate. Involved in mRNA degradation. Catalyzes the phosphorolysis of single-stranded polyribonucleotides processively in the 3'- to 5'-direction. This chain is Polyribonucleotide nucleotidyltransferase, found in Yersinia pestis bv. Antiqua (strain Nepal516).